The following is a 300-amino-acid chain: Spermatogenesis-associated serine-rich protein 1 (300 aa).

Over residues 1 to 10 (MSPSMLTGNS) the composition is skewed to polar residues. Disordered stretches follow at residues 1 to 42 (MSPS…MTEV) and 64 to 91 (TPSG…LPRV). A compositionally biased stretch (basic and acidic residues) spans 27–42 (QLEKVPEKRDSGMTEV). The span at 64-85 (TPSGKSVSSSSSVETGPSVSEP) shows a compositional bias: low complexity. At Ser-113 the chain carries Phosphoserine.

In Homo sapiens (Human), this protein is Spermatogenesis-associated serine-rich protein 1 (SPATS1).